The chain runs to 240 residues: Thiopurine S-methyltransferase (240 aa).

24–35 provides a ligand contact to S-adenosyl-L-methionine; the sequence is WKEKWVTRHISF. Residue S34 is modified to Phosphoserine. Residue F35 participates in substrate binding. N6-acetyllysine is present on K53. Residues L64, E85, 129–130, and R147 each bind S-adenosyl-L-methionine; that span reads SI.

It belongs to the class I-like SAM-binding methyltransferase superfamily. TPMT family. In terms of assembly, monomer.

The protein resides in the cytoplasm. It carries out the reaction S-adenosyl-L-methionine + a thiopurine = S-adenosyl-L-homocysteine + a thiopurine S-methylether.. The catalysed reaction is mercaptopurine + S-adenosyl-L-methionine = 6-methylthiopurine + S-adenosyl-L-homocysteine + H(+). Catalyzes the S-methylation of thiopurine drugs such as 6-mercaptopurine (also called mercaptopurine, 6-MP or its brand name Purinethol) using S-adenosyl-L-methionine as the methyl donor. TPMT activity modulates the cytotoxic effects of thiopurine prodrugs. A natural substrate for this enzyme has yet to be identified. The polypeptide is Thiopurine S-methyltransferase (Tpmt) (Mus musculus (Mouse)).